The sequence spans 228 residues: Urease accessory protein UreF (228 aa).

The protein belongs to the UreF family. UreD, UreF and UreG form a complex that acts as a GTP-hydrolysis-dependent molecular chaperone, activating the urease apoprotein by helping to assemble the nickel containing metallocenter of UreC. The UreE protein probably delivers the nickel.

Its subcellular location is the cytoplasm. Its function is as follows. Required for maturation of urease via the functional incorporation of the urease nickel metallocenter. This is Urease accessory protein UreF from Brucella ovis (strain ATCC 25840 / 63/290 / NCTC 10512).